A 368-amino-acid chain; its full sequence is Protein-glutamate methylesterase/protein-glutamine glutaminase (368 aa).

The Response regulatory domain maps to 9-126; it reads KVLVVDDSAF…SINMKELKDE (118 aa). Asp-60 bears the 4-aspartylphosphate mark. The 194-residue stretch at 161-354 folds into the CheB-type methylesterase domain; it reads SVPARIAVAI…ETVVKAVEII (194 aa). Residues Ser-173, His-200, and Asp-296 contribute to the active site.

Belongs to the CheB family. Post-translationally, phosphorylated by CheA. Phosphorylation of the N-terminal regulatory domain activates the methylesterase activity.

The protein localises to the cytoplasm. It carries out the reaction [protein]-L-glutamate 5-O-methyl ester + H2O = L-glutamyl-[protein] + methanol + H(+). The catalysed reaction is L-glutaminyl-[protein] + H2O = L-glutamyl-[protein] + NH4(+). Functionally, involved in chemotaxis. Part of a chemotaxis signal transduction system that modulates chemotaxis in response to various stimuli. Catalyzes the demethylation of specific methylglutamate residues introduced into the chemoreceptors (methyl-accepting chemotaxis proteins or MCP) by CheR. Also mediates the irreversible deamidation of specific glutamine residues to glutamic acid. The chain is Protein-glutamate methylesterase/protein-glutamine glutaminase from Pyrococcus horikoshii (strain ATCC 700860 / DSM 12428 / JCM 9974 / NBRC 100139 / OT-3).